The chain runs to 509 residues: 2-isopropylmalate synthase (509 aa).

The 263-residue stretch at 4 to 266 (VRIFDTTLRD…YTGIKTEEIY (263 aa)) folds into the Pyruvate carboxyltransferase domain. 4 residues coordinate Mn(2+): D13, H201, H203, and N237. A regulatory domain region spans residues 390 to 509 (TLDYFHISTG…FDYQAKGEKQ (120 aa)).

This sequence belongs to the alpha-IPM synthase/homocitrate synthase family. LeuA type 1 subfamily. Homodimer. It depends on Mn(2+) as a cofactor.

It is found in the cytoplasm. The enzyme catalyses 3-methyl-2-oxobutanoate + acetyl-CoA + H2O = (2S)-2-isopropylmalate + CoA + H(+). It participates in amino-acid biosynthesis; L-leucine biosynthesis; L-leucine from 3-methyl-2-oxobutanoate: step 1/4. Catalyzes the condensation of the acetyl group of acetyl-CoA with 3-methyl-2-oxobutanoate (2-ketoisovalerate) to form 3-carboxy-3-hydroxy-4-methylpentanoate (2-isopropylmalate). The chain is 2-isopropylmalate synthase from Carboxydothermus hydrogenoformans (strain ATCC BAA-161 / DSM 6008 / Z-2901).